Consider the following 490-residue polypeptide: Protein nucleotidyltransferase YdiU (490 aa).

Positions 86, 88, 89, 109, 121, 122, 172, and 179 each coordinate ATP. The Proton acceptor role is filled by Asp248. Asn249 and Asp258 together coordinate Mg(2+). Asp258 contacts ATP.

Belongs to the SELO family. It depends on Mg(2+) as a cofactor. Mn(2+) is required as a cofactor.

It carries out the reaction L-seryl-[protein] + ATP = 3-O-(5'-adenylyl)-L-seryl-[protein] + diphosphate. The catalysed reaction is L-threonyl-[protein] + ATP = 3-O-(5'-adenylyl)-L-threonyl-[protein] + diphosphate. The enzyme catalyses L-tyrosyl-[protein] + ATP = O-(5'-adenylyl)-L-tyrosyl-[protein] + diphosphate. It catalyses the reaction L-histidyl-[protein] + UTP = N(tele)-(5'-uridylyl)-L-histidyl-[protein] + diphosphate. It carries out the reaction L-seryl-[protein] + UTP = O-(5'-uridylyl)-L-seryl-[protein] + diphosphate. The catalysed reaction is L-tyrosyl-[protein] + UTP = O-(5'-uridylyl)-L-tyrosyl-[protein] + diphosphate. Nucleotidyltransferase involved in the post-translational modification of proteins. It can catalyze the addition of adenosine monophosphate (AMP) or uridine monophosphate (UMP) to a protein, resulting in modifications known as AMPylation and UMPylation. This is Protein nucleotidyltransferase YdiU from Rhizobium meliloti (strain 1021) (Ensifer meliloti).